Consider the following 336-residue polypeptide: Large ribosomal subunit protein uL10 (336 aa).

The segment at 305 to 336 (AVVATEEAPKAETKKEEKKEEAAPAAGLGLLF) is disordered. The span at 311 to 326 (EAPKAETKKEEKKEEA) shows a compositional bias: basic and acidic residues.

The protein belongs to the universal ribosomal protein uL10 family. Part of the 50S ribosomal subunit. Forms part of the ribosomal stalk which helps the ribosome interact with GTP-bound translation factors. Forms a heptameric L10(L12)2(L12)2(L12)2 complex, where L10 forms an elongated spine to which the L12 dimers bind in a sequential fashion.

Functionally, forms part of the ribosomal stalk, playing a central role in the interaction of the ribosome with GTP-bound translation factors. This Methanococcus vannielii (strain ATCC 35089 / DSM 1224 / JCM 13029 / OCM 148 / SB) protein is Large ribosomal subunit protein uL10.